We begin with the raw amino-acid sequence, 551 residues long: Alkaline nuclease (551 aa).

It belongs to the herpesviridae alkaline nuclease family. In terms of assembly, interacts with major DNA-binding protein; this interaction increases the nuclease processivity of the alkaline exonuclease.

Its subcellular location is the host nucleus. The protein resides in the host cytoplasm. Its function is as follows. Plays a role in processing non linear or branched viral DNA intermediates in order to promote the production of mature packaged unit-length linear progeny viral DNA molecules. Exhibits endonuclease and exonuclease activities and accepts both double-stranded and single-stranded DNA as substrate. Exonuclease digestion of DNA is in the 5'-&gt; 3' direction and the products are 5'-monophosphate nucleosides. Additionally, forms a recombinase with the major DNA-binding protein, which displays strand exchange activity. In Varicella-zoster virus (strain Oka vaccine) (HHV-3), this protein is Alkaline nuclease.